The following is a 147-amino-acid chain: MNQEELEKCIDAAQNSQQYAHCPYSHFRIGAALLTSCGKIFTGVNVENSSYGLTICAERTAYTKAVSEGYKSFKGIVVASDLKDRFITPCGACRQFGVEFGDFEVVCVKPDRSTFKSSTHKLLPGLFSQEDLIAKAEQDERECKAQN.

One can recognise a CMP/dCMP-type deaminase domain in the interval 4–130; sequence EELEKCIDAA…KLLPGLFSQE (127 aa). 45–51 is a substrate binding site; that stretch reads NVENSSY. Residue cysteine 56 coordinates Zn(2+). Glutamate 58 serves as the catalytic Proton donor. Zn(2+) is bound by residues cysteine 90 and cysteine 93.

The protein belongs to the cytidine and deoxycytidylate deaminase family. Zn(2+) serves as cofactor.

The catalysed reaction is cytidine + H2O + H(+) = uridine + NH4(+). It catalyses the reaction 2'-deoxycytidine + H2O + H(+) = 2'-deoxyuridine + NH4(+). This enzyme scavenges exogenous and endogenous cytidine and 2'-deoxycytidine for UMP synthesis. The sequence is that of Probable cytidine deaminase (cda) from Dictyostelium discoideum (Social amoeba).